The following is a 538-amino-acid chain: Interleukin-21 receptor (538 aa).

The N-terminal stretch at 1–19 (MPRGWAAPLLLLLLQGGWG) is a signal peptide. 3 cysteine pairs are disulfide-bonded: Cys20/Cys109, Cys25/Cys35, and Cys65/Cys81. At 20-232 (CPDLVCYTDY…FQTQSEELKE (213 aa)) the chain is on the extracellular side. Fibronectin type-III domains follow at residues 21-118 (PDLV…AESI) and 119-228 (KPAP…TQSE). Residues Asn73, Asn97, Asn104, Asn125, and Asn135 are each glycosylated (N-linked (GlcNAc...) asparagine). Trp214 carries a C-linked (Man) tryptophan glycan. The WSXWS motif signature appears at 214 to 218 (WSEWS). Residues 233 to 253 (GWNPHLLLLLLLVIVFIPAFW) traverse the membrane as a helical segment. Residues 254–538 (SLKTHPLWRL…PLSSPGPQAS (285 aa)) lie on the Cytoplasmic side of the membrane. A Box 1 motif motif is present at residues 266–274 (KIWAVPSPE). 2 disordered regions span residues 342–367 (ESDG…SEER) and 457–487 (EDWA…GLDM).

The protein belongs to the type I cytokine receptor family. Type 4 subfamily. Heterodimer with the common gamma subunit. Associates with JAK1. In terms of processing, C-mannosylated at Trp-214 in the WSXWS motif, the sugar chain makes extensive hydrogen bonds with Asn-73 sugar, and bridges the two fibronectin domains transforming the V-shaped receptor into an A-frame. As to expression, selectively expressed in lymphoid tissues. Most highly expressed in thymus and spleen.

The protein resides in the membrane. In terms of biological role, this is a receptor for interleukin-21. The chain is Interleukin-21 receptor (IL21R) from Homo sapiens (Human).